The sequence spans 83 residues: MEEERIYTIPLRDVTNKSPTTKRAPRAIRAIREFLKKHMKSDIVKLDNTINEKVWERSLNKIPAKVRVKVVKEGDVVKATLVE.

It belongs to the eukaryotic ribosomal protein eL31 family.

This chain is Large ribosomal subunit protein eL31, found in Methanococcus maripaludis (strain DSM 14266 / JCM 13030 / NBRC 101832 / S2 / LL).